Reading from the N-terminus, the 266-residue chain is DNA damage-regulated autophagy modulator protein 2 (266 aa).

Helical transmembrane passes span 8 to 28 (LSFL…FSYI), 53 to 73 (KCLF…TIYV), 88 to 108 (IIKL…GLSI), 118 to 138 (FAAH…YMFV), 160 to 180 (LLLV…SSVL), and 207 to 227 (ITTA…LTYI).

This sequence belongs to the DRAM/TMEM150 family. Expression is down-regulated in ovarian tumors (at protein level). Widely expressed with highest levels in placenta and heart. Expressed in the retina. Not detected in brain or thymus.

The protein localises to the lysosome membrane. It is found in the photoreceptor inner segment. Its subcellular location is the apical cell membrane. In terms of biological role, plays a role in the initiation of autophagy. In the retina, might be involved in the process of photoreceptor cells renewal and recycling to preserve visual function. Induces apoptotic cell death when coexpressed with DRAM1. The protein is DNA damage-regulated autophagy modulator protein 2 (DRAM2) of Homo sapiens (Human).